The sequence spans 57 residues: Small ribosomal subunit protein bS21 (57 aa).

Residues 32–42 (VRRREHYEKPS) show a composition bias toward basic and acidic residues. The disordered stretch occupies residues 32-57 (VRRREHYEKPSQRRKRKLEASRRRRR). The segment covering 43-57 (QRRKRKLEASRRRRR) has biased composition (basic residues).

This sequence belongs to the bacterial ribosomal protein bS21 family.

The polypeptide is Small ribosomal subunit protein bS21 (Synechococcus elongatus (strain ATCC 33912 / PCC 7942 / FACHB-805) (Anacystis nidulans R2)).